Here is a 134-residue protein sequence, read N- to C-terminus: S-protein homolog 18 (134 aa).

The signal sequence occupies residues 1-25 (MCPSSFRLILSVILIAFLFVGLCEA). Asn87 is a glycosylation site (N-linked (GlcNAc...) asparagine).

This sequence belongs to the plant self-incompatibility (S1) protein family.

The protein localises to the secreted. This Arabidopsis thaliana (Mouse-ear cress) protein is S-protein homolog 18.